Here is a 390-residue protein sequence, read N- to C-terminus: Phosphoglycerate kinase (390 aa).

Substrate-binding positions include 21 to 23, R36, 59 to 62, R114, and R147; these read DLN and HLGR. Residues K198, E314, and 340–343 each bind ATP; that span reads GGDT.

It belongs to the phosphoglycerate kinase family. In terms of assembly, monomer.

The protein resides in the cytoplasm. The catalysed reaction is (2R)-3-phosphoglycerate + ATP = (2R)-3-phospho-glyceroyl phosphate + ADP. It functions in the pathway carbohydrate degradation; glycolysis; pyruvate from D-glyceraldehyde 3-phosphate: step 2/5. In Buchnera aphidicola subsp. Acyrthosiphon pisum (strain APS) (Acyrthosiphon pisum symbiotic bacterium), this protein is Phosphoglycerate kinase (pgk).